The primary structure comprises 360 residues: Coiled-coil domain-containing protein 86 (360 aa).

Over residues 1 to 12 the composition is skewed to basic residues; that stretch reads MDTPLRRSRRLG. Disordered stretches follow at residues 1–314 and 328–360; these read MDTP…ENER and LKRA…AAKI. Serine 21, serine 24, serine 47, serine 50, and serine 58 each carry phosphoserine. Phosphothreonine is present on threonine 65. Phosphoserine is present on residues serine 66, serine 69, serine 80, serine 91, serine 102, serine 110, serine 113, and serine 128. Residues 66–83 are compositionally biased toward polar residues; sequence SPGSPRLQQGSGLESPQG. Residues 153-164 are compositionally biased toward pro residues; it reads QLPPVPGSPEPY. 3 positions are modified to phosphoserine: serine 188, serine 217, and serine 218. Over residues 238–254 the composition is skewed to basic residues; sequence GKPKSGRVWKDRSKKRF. Residues 272–323 adopt a coiled-coil conformation; the sequence is KERQERKLAKDFARHLEEEKERRRQEKKQRRAENLKRRLENERKAEVVQVIR. 2 stretches are compositionally biased toward basic and acidic residues: residues 273-295 and 302-314; these read ERQE…ERRR and RAEN…ENER. Arginine 342 is subject to Citrulline.

In terms of processing, citrullinated by PADI4.

The protein localises to the nucleus. It localises to the chromosome. Its subcellular location is the nucleolus. Its function is as follows. Required for proper chromosome segregation during mitosis and error-free mitotic progression. The sequence is that of Coiled-coil domain-containing protein 86 from Pongo abelii (Sumatran orangutan).